Consider the following 137-residue polypeptide: Large ribosomal subunit protein uL16 (137 aa).

It belongs to the universal ribosomal protein uL16 family. Part of the 50S ribosomal subunit.

Functionally, binds 23S rRNA and is also seen to make contacts with the A and possibly P site tRNAs. This Maricaulis maris (strain MCS10) (Caulobacter maris) protein is Large ribosomal subunit protein uL16.